The sequence spans 418 residues: Exodeoxyribonuclease 7 large subunit (418 aa).

Belongs to the XseA family. In terms of assembly, heterooligomer composed of large and small subunits.

The protein resides in the cytoplasm. The catalysed reaction is Exonucleolytic cleavage in either 5'- to 3'- or 3'- to 5'-direction to yield nucleoside 5'-phosphates.. Its function is as follows. Bidirectionally degrades single-stranded DNA into large acid-insoluble oligonucleotides, which are then degraded further into small acid-soluble oligonucleotides. This is Exodeoxyribonuclease 7 large subunit from Acaryochloris marina (strain MBIC 11017).